Consider the following 386-residue polypeptide: Glucose-1-phosphate adenylyltransferase (386 aa).

Residues tyrosine 99, glycine 164, 179 to 180 (EK), and serine 190 contribute to the alpha-D-glucose 1-phosphate site.

It belongs to the bacterial/plant glucose-1-phosphate adenylyltransferase family. Homotetramer.

The catalysed reaction is alpha-D-glucose 1-phosphate + ATP + H(+) = ADP-alpha-D-glucose + diphosphate. It participates in glycan biosynthesis; glycogen biosynthesis. Involved in the biosynthesis of ADP-glucose, a building block required for the elongation reactions to produce glycogen. Catalyzes the reaction between ATP and alpha-D-glucose 1-phosphate (G1P) to produce pyrophosphate and ADP-Glc. This chain is Glucose-1-phosphate adenylyltransferase, found in Clostridioides difficile (strain 630) (Peptoclostridium difficile).